The following is a 32-amino-acid chain: Photosystem II reaction center protein T (32 aa).

A helical transmembrane segment spans residues 3–23 (AFAYVLILTLAVVTLFFAVAF).

This sequence belongs to the PsbT family. In terms of assembly, PSII is composed of 1 copy each of membrane proteins PsbA, PsbB, PsbC, PsbD, PsbE, PsbF, PsbH, PsbI, PsbJ, PsbK, PsbL, PsbM, PsbT, PsbX, PsbY, Psb30/Ycf12, peripheral proteins PsbO, CyanoQ (PsbQ), PsbU, PsbV and a large number of cofactors. It forms dimeric complexes.

The protein resides in the cellular thylakoid membrane. Functionally, found at the monomer-monomer interface of the photosystem II (PS II) dimer, plays a role in assembly and dimerization of PSII. PSII is a light-driven water plastoquinone oxidoreductase, using light energy to abstract electrons from H(2)O, generating a proton gradient subsequently used for ATP formation. In Prochlorococcus marinus (strain MIT 9301), this protein is Photosystem II reaction center protein T.